The primary structure comprises 456 residues: Alcohol acyltransferase 17 (456 aa).

Active-site proton acceptor residues include histidine 166 and aspartate 382.

It belongs to the plant acyltransferase family. As to expression, expressed in fruit.

Its function is as follows. Involved in the biosynthesis of volatile esters which confer kiwifruit flavor. Alcohol acyl transferase that can use a wide range of alcohols as substrate to produce esters. This Actinidia deliciosa (Kiwi) protein is Alcohol acyltransferase 17.